A 553-amino-acid chain; its full sequence is Arginine--tRNA ligase (553 aa).

Positions Ala-130 to Gly-140 match the 'HIGH' region motif.

Belongs to the class-I aminoacyl-tRNA synthetase family. Monomer.

It is found in the cytoplasm. The enzyme catalyses tRNA(Arg) + L-arginine + ATP = L-arginyl-tRNA(Arg) + AMP + diphosphate. This chain is Arginine--tRNA ligase, found in Saccharopolyspora erythraea (strain ATCC 11635 / DSM 40517 / JCM 4748 / NBRC 13426 / NCIMB 8594 / NRRL 2338).